We begin with the raw amino-acid sequence, 262 residues long: Ribosomal RNA small subunit methyltransferase A (262 aa).

Asn-14, Leu-16, Gly-41, Glu-62, Asp-87, and Asn-109 together coordinate S-adenosyl-L-methionine.

This sequence belongs to the class I-like SAM-binding methyltransferase superfamily. rRNA adenine N(6)-methyltransferase family. RsmA subfamily.

It is found in the cytoplasm. The catalysed reaction is adenosine(1518)/adenosine(1519) in 16S rRNA + 4 S-adenosyl-L-methionine = N(6)-dimethyladenosine(1518)/N(6)-dimethyladenosine(1519) in 16S rRNA + 4 S-adenosyl-L-homocysteine + 4 H(+). Functionally, specifically dimethylates two adjacent adenosines (A1518 and A1519) in the loop of a conserved hairpin near the 3'-end of 16S rRNA in the 30S particle. May play a critical role in biogenesis of 30S subunits. This is Ribosomal RNA small subunit methyltransferase A from Francisella tularensis subsp. tularensis (strain FSC 198).